The sequence spans 1063 residues: Coiled-coil domain-containing protein 187 (1063 aa).

Disordered regions lie at residues 1 to 41 (MPTL…AADW), 62 to 184 (RWPG…SRLH), 219 to 278 (RVEA…KDED), 300 to 319 (PPPV…PALT), 392 to 484 (RKGG…ERLG), 496 to 539 (GQAC…ATQP), and 551 to 658 (WEDP…LEEK). The span at 111–124 (SSVSSGRLSCSSGG) shows a compositional bias: low complexity. Residues 146 to 160 (RKSDARLEQLRDKIR) are compositionally biased toward basic and acidic residues. A compositionally biased stretch (polar residues) spans 163–181 (AWQQGSCASLGTSAPSSAS). The span at 219 to 233 (RVEAKASHGQGRELS) shows a compositional bias: basic and acidic residues. Composition is skewed to basic and acidic residues over residues 431–442 (TERKHSSLERAR) and 472–484 (SFQR…ERLG). A compositionally biased stretch (low complexity) spans 508 to 517 (QRQGPSSQRP). The stretch at 816 to 851 (HLRHKQAQLQALETTAKVLKQRVDSLTAKLQGAEAL) forms a coiled coil. Positions 1010–1030 (PRSCGKGDPADRPWAGWSGGR) are disordered.

The polypeptide is Coiled-coil domain-containing protein 187 (Homo sapiens (Human)).